The sequence spans 559 residues: Phenylalanine--tRNA ligase beta subunit (559 aa).

A B5 domain is found at 274-350 (FEPKIIDVHT…LGYGFNELPA (77 aa)). Residues Asp328, Asp334, Glu337, and Asn338 each coordinate Mg(2+).

It belongs to the phenylalanyl-tRNA synthetase beta subunit family. Type 2 subfamily. As to quaternary structure, tetramer of two alpha and two beta subunits. Mg(2+) serves as cofactor.

The protein resides in the cytoplasm. It catalyses the reaction tRNA(Phe) + L-phenylalanine + ATP = L-phenylalanyl-tRNA(Phe) + AMP + diphosphate + H(+). This Methanosphaera stadtmanae (strain ATCC 43021 / DSM 3091 / JCM 11832 / MCB-3) protein is Phenylalanine--tRNA ligase beta subunit.